The sequence spans 286 residues: Small ribosomal subunit protein uS2 (286 aa).

Residues 231–286 (ERAQAEAKAAAGDNDAPVSSEGESTEVASDAASTASETTATSSDESAAESSEAESK) form a disordered region. Residues 255–280 (TEVASDAASTASETTATSSDESAAES) are compositionally biased toward low complexity.

This sequence belongs to the universal ribosomal protein uS2 family.

This chain is Small ribosomal subunit protein uS2, found in Corynebacterium kroppenstedtii (strain DSM 44385 / JCM 11950 / CIP 105744 / CCUG 35717).